A 201-amino-acid polypeptide reads, in one-letter code: Imidazoleglycerol-phosphate dehydratase (201 aa).

It belongs to the imidazoleglycerol-phosphate dehydratase family.

It localises to the cytoplasm. It catalyses the reaction D-erythro-1-(imidazol-4-yl)glycerol 3-phosphate = 3-(imidazol-4-yl)-2-oxopropyl phosphate + H2O. It functions in the pathway amino-acid biosynthesis; L-histidine biosynthesis; L-histidine from 5-phospho-alpha-D-ribose 1-diphosphate: step 6/9. The chain is Imidazoleglycerol-phosphate dehydratase from Prochlorococcus marinus (strain AS9601).